The sequence spans 202 residues: MKLVEDTDSKILDTKKVSDKEAEEAFKTILTWMGEDPSREGLLETPKRVVKAFKEYFGGYTEDAEKILEKTFGDVEGYDDMVVEKNISVSSHCEHHMAPIVGTAHVAYIPNERVVGLSKLARVVEVFSKRLQTQERLTMQVAQALMTSLDAKGVAVTIDAAHQCMTMRGIKKENATTVTNYFLGEFKKDLSVQNRYLRFISK.

Cysteine 93, histidine 96, and cysteine 164 together coordinate Zn(2+).

Belongs to the GTP cyclohydrolase I family. In terms of assembly, toroid-shaped homodecamer, composed of two pentamers of five dimers.

The catalysed reaction is GTP + H2O = 7,8-dihydroneopterin 3'-triphosphate + formate + H(+). It functions in the pathway cofactor biosynthesis; 7,8-dihydroneopterin triphosphate biosynthesis; 7,8-dihydroneopterin triphosphate from GTP: step 1/1. This chain is GTP cyclohydrolase 1, found in Pelagibacter ubique (strain HTCC1062).